The following is a 615-amino-acid chain: MPSRKFADGEVVRGRWPGSSLYYEVEILSHDSASQLYTVKYKDGTELELKENDIKPLTSFRQRKGGSTSSSPSRRRGSRSRSRSRSPGRPPKSARRSASASHQADIKEARREVEVKLTPLILKPFGNSISRYNGEPEHIERNDVPHKNTQEKFNLSQESSYIATQCSLRPKREEVKLKEIDSKEEKFVAKELAVRTFEVTPIRAKDLEFGGVPGVFLIMFGLPVFLFLLLLMCKQKDPSLLNFPPPLPALYELWETRVFGVYLLWFLIQVVFYLLPIGKVVEGTPLIDGRRLKYRLNGFYAFILTSAVIGTSLFQGVEFHYVYSHFLQFALAATVFCVVLSVYLYMRSLKAPRNDLSPASSGNAVYDFFIGRELNPRIGTFDLKYFCELRPGLIGWVVINLVMLLAEMKIQDRAVPSLAMILVNSFQLLYVVDALWNEEALLTTMDIIHDGFGFMLAFGDLVWVPFIYSFQAFYLVSHPNEVSWPMASLIIVLKFCGYVIFRGANSQKNAFRKNPSDPKLAHLKTIHTSTGKNLLVSGWWGFARHPNYLGDLIMALAWSLACGFNHILPYFYIIYFTMLLVHREARDEYHCKKKYGVAWEKYCQRVPYRIFPYIY.

A Tudor domain is found at 1–62 (MPSRKFADGE…DIKPLTSFRQ (62 aa)). Topologically, residues 1-211 (MPSRKFADGE…IRAKDLEFGG (211 aa)) are nuclear. The segment at 53–109 (DIKPLTSFRQRKGGSTSSSPSRRRGSRSRSRSRSPGRPPKSARRSASASHQADIKEA) is disordered. Lysine 55 bears the N6-acetyllysine mark. Threonine 58 is subject to Phosphothreonine. 2 positions are modified to phosphoserine: serine 59 and serine 67. Phosphoserine; by CDK1 occurs at positions 71 and 86. Over residues 73-86 (SRRRGSRSRSRSRS) the composition is skewed to basic residues. Phosphoserine is present on residues serine 97 and serine 99. Threonine 118 is subject to Phosphothreonine. Position 128 is a phosphoserine (serine 128). Threonine 200 carries the phosphothreonine modification. 8 consecutive transmembrane segments (helical) span residues 212–232 (VPGV…LLLM), 258–278 (VFGV…LPIG), 299–319 (FYAF…GVEF), 326–346 (FLQF…YLYM), 415–435 (VPSL…VDAL), 447–467 (IIHD…VPFI), 481–501 (EVSW…YVIF), and 561–581 (ACGF…MLLV). Lysine 594 and lysine 601 each carry N6-acetyllysine.

The protein belongs to the ERG4/ERG24 family. Interacts with CBX5. Interacts with DNA. Interaction with DNA is sequence independent with higher affinity for supercoiled and relaxed circular DNA than linear DNA. Interacts with lamin B. Interacts with CLNK. Interacts with TMEM147; promoting LBR localization to the nucleus inner membrane. In terms of processing, phosphorylated by CDK1 in mitosis when the inner nuclear membrane breaks down into vesicles that dissociate from the lamina and the chromatin. It is phosphorylated by different protein kinases in interphase when the membrane is associated with these structures. Phosphorylation of LBR and HP1 proteins may be responsible for some of the alterations in chromatin organization and nuclear structure which occur at various times during the cell cycle. Phosphorylated by SRPK1. In late anaphase LBR is dephosphorylated, probably by PP1 and/or PP2A, allowing reassociation with chromatin.

The protein localises to the nucleus inner membrane. It localises to the nucleus. The protein resides in the cytoplasm. It is found in the endoplasmic reticulum membrane. It carries out the reaction 5alpha-cholest-8,14-dien-3beta-ol + NADPH + H(+) = 5alpha-cholest-8-en-3beta-ol + NADP(+). The enzyme catalyses 4,4-dimethyl-5alpha-cholesta-8,24-dien-3beta-ol + NADP(+) = 4,4-dimethyl-5alpha-cholesta-8,14,24-trien-3beta-ol + NADPH + H(+). It catalyses the reaction 4,4-dimethyl-8,14-cholestadien-3beta-ol + NADPH + H(+) = 4,4-dimethyl-5alpha-cholest-8-en-3beta-ol + NADP(+). Its pathway is steroid biosynthesis; cholesterol biosynthesis. In terms of biological role, catalyzes the reduction of the C14-unsaturated bond of lanosterol, as part of the metabolic pathway leading to cholesterol biosynthesis. Plays a critical role in myeloid cell cholesterol biosynthesis which is essential to both myeloid cell growth and functional maturation. Mediates the activation of NADPH oxidases, perhaps by maintaining critical levels of cholesterol required for membrane lipid raft formation during neutrophil differentiation. Anchors the lamina and the heterochromatin to the inner nuclear membrane. In Pongo abelii (Sumatran orangutan), this protein is Delta(14)-sterol reductase LBR (LBR).